The sequence spans 427 residues: MESLTLQPIARVDGTINLPGSKSVSNRALLLAALAHGKTVLTNLLDSDDVRHMLNALTALGVSYTLSADRTRCEIIGNGGPLHAESARELFLGNAGTAMRPLAAALCLGSNDIVLTGEPRMKERPIGHLVDALRQGGAKITYLEQENYPPLRLQGGFTGGNVDVDGSVSSQFLTALLMTAPLAPEDTVIRIKGDLVSKPYIDITLNLMKTFGVEIENQHYQQFVVKGGQSYQSPGTYLVEGDASSASYFLAAAAIRGGTVKVTGIGRNSMQGDIRFADVLEKMGATICWGDDYISCTRGELNAIDMDMNHIPDAAMTIATAALFAKGTTTLRNIYNWRVKESDRLFAMATELRKVGAEVEEGHDFIRITPPEKLKFAEIATYNDHRMAMCFSLVALSDTPVTILDPKCTAKTFPDYFEQLARISQPG.

Residues lysine 22, serine 23, and arginine 27 each contribute to the 3-phosphoshikimate site. Lysine 22 contributes to the phosphoenolpyruvate binding site. Phosphoenolpyruvate is bound by residues glycine 96 and arginine 124. Residues serine 169, serine 170, glutamine 171, serine 197, aspartate 313, asparagine 336, and lysine 340 each coordinate 3-phosphoshikimate. A phosphoenolpyruvate-binding site is contributed by glutamine 171. Aspartate 313 acts as the Proton acceptor in catalysis. 3 residues coordinate phosphoenolpyruvate: arginine 344, arginine 386, and lysine 411.

This sequence belongs to the EPSP synthase family. Monomer.

Its subcellular location is the cytoplasm. It catalyses the reaction 3-phosphoshikimate + phosphoenolpyruvate = 5-O-(1-carboxyvinyl)-3-phosphoshikimate + phosphate. The protein operates within metabolic intermediate biosynthesis; chorismate biosynthesis; chorismate from D-erythrose 4-phosphate and phosphoenolpyruvate: step 6/7. Catalyzes the transfer of the enolpyruvyl moiety of phosphoenolpyruvate (PEP) to the 5-hydroxyl of shikimate-3-phosphate (S3P) to produce enolpyruvyl shikimate-3-phosphate and inorganic phosphate. This chain is 3-phosphoshikimate 1-carboxyvinyltransferase, found in Escherichia coli O6:H1 (strain CFT073 / ATCC 700928 / UPEC).